A 180-amino-acid polypeptide reads, in one-letter code: Large ribosomal subunit protein uL5 (180 aa).

It belongs to the universal ribosomal protein uL5 family. Part of the 50S ribosomal subunit; part of the 5S rRNA/L5/L18/L25 subcomplex. Contacts the 5S rRNA and the P site tRNA. Forms a bridge to the 30S subunit in the 70S ribosome.

Functionally, this is one of the proteins that bind and probably mediate the attachment of the 5S RNA into the large ribosomal subunit, where it forms part of the central protuberance. In the 70S ribosome it contacts protein S13 of the 30S subunit (bridge B1b), connecting the 2 subunits; this bridge is implicated in subunit movement. Contacts the P site tRNA; the 5S rRNA and some of its associated proteins might help stabilize positioning of ribosome-bound tRNAs. The sequence is that of Large ribosomal subunit protein uL5 from Ligilactobacillus salivarius (strain UCC118) (Lactobacillus salivarius).